We begin with the raw amino-acid sequence, 415 residues long: uncharacterized protein (415 aa).

This is an uncharacterized protein from Rickettsia prowazekii (strain Madrid E).